The chain runs to 42 residues: Iota-conotoxin-like R11.1 (42 aa).

Disulfide bonds link cysteine 5/cysteine 19, cysteine 12/cysteine 22, cysteine 18/cysteine 27, and cysteine 21/cysteine 36.

This sequence belongs to the conotoxin I1 superfamily. Expressed by the venom duct.

Its subcellular location is the secreted. Its function is as follows. Iota-conotoxins bind to voltage-gated sodium channels (Nav) and act as agonists by shifting the voltage-dependence of activation to more hyperpolarized levels. Produces general excitatory symptoms. This is Iota-conotoxin-like R11.1 from Conus radiatus (Rayed cone).